Here is a 214-residue protein sequence, read N- to C-terminus: Glycerol-3-phosphate acyltransferase (214 aa).

Transmembrane regions (helical) follow at residues 4 to 24 (LIVAVVAYLIGSVSFAVIVSA), 52 to 72 (AAILTLIGDAFKGWLPVWFVV), 82 to 102 (ETSVAIASVAVFLGHLYPVFF), 118 to 138 (LAINPILGVATLLTWLIVAFF), and 159 to 179 (FLFGPHVIALAIVVMSSLLVW).

It belongs to the PlsY family. In terms of assembly, probably interacts with PlsX.

Its subcellular location is the cell inner membrane. The enzyme catalyses an acyl phosphate + sn-glycerol 3-phosphate = a 1-acyl-sn-glycero-3-phosphate + phosphate. The protein operates within lipid metabolism; phospholipid metabolism. Functionally, catalyzes the transfer of an acyl group from acyl-phosphate (acyl-PO(4)) to glycerol-3-phosphate (G3P) to form lysophosphatidic acid (LPA). This enzyme utilizes acyl-phosphate as fatty acyl donor, but not acyl-CoA or acyl-ACP. This chain is Glycerol-3-phosphate acyltransferase, found in Paraburkholderia phytofirmans (strain DSM 17436 / LMG 22146 / PsJN) (Burkholderia phytofirmans).